We begin with the raw amino-acid sequence, 616 residues long: ATP-dependent RNA helicase VAD1 (616 aa).

A disordered region spans residues 1–35 (MASSSTLANDDWKQGLAAPPKDLRPQTEDVTATQG). A Q motif motif is present at residues 36-64 (SRFEDFGLRRELLMGIYTAGFERPSPIQE). A Helicase ATP-binding domain is found at 67-238 (IPMALTGRDI…DQHMVQPYEI (172 aa)). ATP is bound at residue 80 to 87 (AKNGTGKT). The DEAD box signature appears at 186 to 189 (DEAD). The 161-residue stretch at 248 to 408 (GVTQYYAYVE…PIPAVIDPVL (161 aa)) folds into the Helicase C-terminal domain. The disordered stretch occupies residues 416–616 (EEERESPPPK…GASQSQQAQA (201 aa)). Composition is skewed to low complexity over residues 427–441 (AAIAAPPAQQQPQQR), 458–500 (PAAA…NSSP), and 508–523 (YPQQAPTQAQGPAQMQ). A compositionally biased stretch (polar residues) spans 529–545 (PATQPQASAQIPVQGQT). 2 stretches are compositionally biased toward low complexity: residues 550-579 (PRAQQQGQQQPSQPGQAEGQSQPNRRPNTG) and 606-616 (AGASQSQQAQA).

The protein belongs to the DEAD box helicase family. DDX6/DHH1 subfamily.

The protein resides in the cytoplasm. It is found in the P-body. The enzyme catalyses ATP + H2O = ADP + phosphate + H(+). In terms of biological role, ATP-dependent RNA helicase involved in mRNA turnover, and more specifically in mRNA decapping. Is involved in G1/S DNA-damage checkpoint recovery, probably through the regulation of the translational status of a subset of mRNAs. May also have a role in translation and mRNA nuclear export. Blocks autophagy in nutrient-rich conditions by, at least partly, binding and repressing the expression of a set of ATG genes, including ATG3, ATG7, ATG8, ATG19, ATG20 and ATG22. VAD1-mediated repression of autophagy is regulated by TOR-dependent phosphorylation of the decapping enzyme DCP2. Regulates multiple virulence-associated genes. Repression of autophagy by VAD1 also regulates the pathogenesis. This Cryptococcus neoformans var. grubii serotype A (strain H99 / ATCC 208821 / CBS 10515 / FGSC 9487) (Filobasidiella neoformans var. grubii) protein is ATP-dependent RNA helicase VAD1.